The sequence spans 690 residues: DNA ligase (690 aa).

NAD(+) is bound by residues 36–40, 85–86, and Glu124; these read DAVYD and SL. Residue Lys126 is the N6-AMP-lysine intermediate of the active site. Positions 147, 184, 308, and 332 each coordinate NAD(+). Cys426, Cys429, Cys444, and Cys449 together coordinate Zn(2+). In terms of domain architecture, BRCT spans 614–690; the sequence is NQSNVFDGKS…INENELKLLL (77 aa).

This sequence belongs to the NAD-dependent DNA ligase family. LigA subfamily. Mg(2+) serves as cofactor. Mn(2+) is required as a cofactor.

It catalyses the reaction NAD(+) + (deoxyribonucleotide)n-3'-hydroxyl + 5'-phospho-(deoxyribonucleotide)m = (deoxyribonucleotide)n+m + AMP + beta-nicotinamide D-nucleotide.. DNA ligase that catalyzes the formation of phosphodiester linkages between 5'-phosphoryl and 3'-hydroxyl groups in double-stranded DNA using NAD as a coenzyme and as the energy source for the reaction. It is essential for DNA replication and repair of damaged DNA. This chain is DNA ligase, found in Prochlorococcus marinus (strain NATL1A).